A 466-amino-acid polypeptide reads, in one-letter code: Nuclear pore complex protein Nup50 (466 aa).

The segment covering 1–14 (MAKRVAEKELTDRN) has biased composition (basic and acidic residues). The segment at 1 to 22 (MAKRVAEKELTDRNWDEEDEVE) is disordered. The residue at position 8 (lysine 8) is an N6-acetyllysine. Serine 52 is subject to Phosphoserine. Residues 76-77 (FG) form repeat 1. The interval 76–302 (FGGSGGKPLE…FSAGSSSLFG (227 aa)) is 5 X 2 AA repeats of F-G. Position 82 is an N6-acetyllysine (lysine 82). Residues 112 to 113 (FG) form repeat 2. Lysine 126 carries the N6-acetyllysine modification. Disordered regions lie at residues 128 to 150 (ISSP…STAC) and 200 to 257 (LENG…AEKK). Positions 131 to 150 (PKCNNSNQPPSSGPASSTAC) are enriched in polar residues. The tract at residues 143–205 (GPASSTACPG…IEKQLENGGG (63 aa)) is binding to CDKN1B. Serine 208 is modified (phosphoserine). Repeat 3 spans residues 225 to 226 (FG). Positions 225–235 (FGSTKLQQESP) are enriched in polar residues. At serine 234 the chain carries Phosphoserine. The span at 241-257 (NKAEDTSEKVEFTAEKK) shows a compositional bias: basic and acidic residues. Threonine 246 is modified (phosphothreonine). Serine 268 carries the post-translational modification Phosphoserine. Repeat unit 4 spans residues 271–272 (FG). Serine 294 is subject to Phosphoserine. Copy 5 of the repeat occupies 301–302 (FG). Residues 316–343 (SAKASESPAGGGSSECRDGEEEENDEPP) are disordered. Residues 333–466 (DGEEEENDEP…HKILLEKKDA (134 aa)) enclose the RanBD1 domain. Lysine 351 is covalently cross-linked (Glycyl lysine isopeptide (Lys-Gly) (interchain with G-Cter in SUMO2)). Lysine 448 is subject to N6-acetyllysine.

In terms of assembly, does not interact with TPR. Interacts with Importin alpha-2, Importin beta, Importin beta-2, NUP153, Ran binding protein 7, CDKN1B and itself. As to expression, widely expressed at low levels. Highest in the developing neural tube and adult testes.

The protein localises to the nucleus. The protein resides in the nuclear pore complex. It is found in the nucleus membrane. Functionally, component of the nuclear pore complex that has a direct role in nuclear protein import. Actively displaces NLSs from importin-alpha, and facilitates disassembly of the importin-alpha:beta-cargo complex and importin recycling. Interacts with regulatory proteins of cell cycle progression including CDKN1B. This interaction is required for correct intracellular transport and degradation of CDKN1B. This Mus musculus (Mouse) protein is Nuclear pore complex protein Nup50 (Nup50).